A 483-amino-acid chain; its full sequence is Regulatory protein ViaA (483 aa).

This sequence belongs to the ViaA family. Homodimer. Interacts with RavA.

The protein localises to the cytoplasm. Component of the RavA-ViaA chaperone complex, which may act on the membrane to optimize the function of some of the respiratory chains. ViaA stimulates the ATPase activity of RavA. This Escherichia coli O127:H6 (strain E2348/69 / EPEC) protein is Regulatory protein ViaA.